Reading from the N-terminus, the 459-residue chain is Polycomb protein mes-6 (459 aa).

WD repeat units follow at residues 146–186 (SVGW…CLIV), 192–231 (CHAGTILSVDWSTDGDFILSCGFDHQLMEWDLSVKQVKEH), 305–346 (MHSD…GEVE), 370–409 (SGSAWFIKFAVDPRRRWLVCGGAGGSVMFFDLRNNEETNP), and 415–454 (VGSRTVRQASFSTCGRFLVLVTDEGFVCRFDRVSASVDAK).

Belongs to the WD repeat ESC family. Interacts directly with the N-terminal domain of mes-2. Forms a heterotrimeric complex with mes-2 and mes-3. Does not interact with mes-4. In adults, it is predominantly expressed in the germline, and weakly expressed in intestinal cells.

It localises to the nucleus. Polycomb group (PcG) protein. PcG proteins act by forming multiprotein complexes, which are required to maintain the transcriptionally repressive state of homeotic genes throughout development. In association with the nfya-1-NF-Y complex, may play a role in repressing the expression of the homeobox protein egl-5 in tissues such as the head. PcG proteins are not required to initiate repression, but to maintain it during later stages of development. The mes-2/mes-3/mes-6 complex may participate in the global inactivation of the X chromosomes in germline cells. The complex may act via methylation of histone H3 'Lys-27', rendering chromatin heritably changed in its expressibility. This complex is required to exclude mes-4 from the inactivated X-chromosomes in germline cells. Required for small-RNA-induced H3K27 trimethylation. This chain is Polycomb protein mes-6, found in Caenorhabditis elegans.